The chain runs to 174 residues: Nucleoside-triphosphatase THEP1 (174 aa).

ATP contacts are provided by residues 8–15 and 99–106; these read GIPGIGKS and LIVIDEVG.

It belongs to the THEP1 NTPase family.

The enzyme catalyses a ribonucleoside 5'-triphosphate + H2O = a ribonucleoside 5'-diphosphate + phosphate + H(+). Functionally, has nucleotide phosphatase activity towards ATP, GTP, CTP, TTP and UTP. May hydrolyze nucleoside diphosphates with lower efficiency. The polypeptide is Nucleoside-triphosphatase THEP1 (Methanosarcina barkeri (strain Fusaro / DSM 804)).